A 148-amino-acid chain; its full sequence is MDIRLDSRRAIQAGPLVTTGRIAGAALRMARPFLGIARRLQFKAKAFELALRSVALQLMNDAMADADEAMEETEEDADALGGPRQEVRAVSDGTIVTEREMTCPQNRYCHECSWTGAAAGQNVAAKGAGAAVPGPNRRTGSGERRGYG.

Residues 66-78 (ADEAMEETEEDAD) are compositionally biased toward acidic residues. Disordered stretches follow at residues 66–93 (ADEAMEETEEDADALGGPRQEVRAVSDG) and 124–148 (AAKGAGAAVPGPNRRTGSGERRGYG). Residues 124–136 (AAKGAGAAVPGPN) show a composition bias toward low complexity.

Its function is as follows. Involved in efficiency of soybean nodulation and in nodulation delay. This chain is Nodulation protein NolJ (nolJ), found in Rhizobium fredii (Sinorhizobium fredii).